A 124-amino-acid polypeptide reads, in one-letter code: Cytochrome c oxidase subunit 4 isoform 1, mitochondrial (124 aa).

The residue at position 4 (Lys-4) is an N6-acetyllysine; alternate. Lys-4 is subject to N6-succinyllysine; alternate. Residues Ser-31 and Ser-33 each carry the phosphoserine modification. Residue Lys-35 is modified to N6-acetyllysine; alternate. An N6-succinyllysine; alternate modification is found at Lys-35. At Lys-42 the chain carries N6-acetyllysine.

This sequence belongs to the cytochrome c oxidase IV family. Component of the cytochrome c oxidase (complex IV, CIV), a multisubunit enzyme composed of 14 subunits. The complex is composed of a catalytic core of 3 subunits MT-CO1, MT-CO2 and MT-CO3, encoded in the mitochondrial DNA, and 11 supernumerary subunits COX4I, COX5A, COX5B, COX6A, COX6B, COX6C, COX7A, COX7B, COX7C, COX8 and NDUFA4, which are encoded in the nuclear genome. The complex exists as a monomer or a dimer and forms supercomplexes (SCs) in the inner mitochondrial membrane with NADH-ubiquinone oxidoreductase (complex I, CI) and ubiquinol-cytochrome c oxidoreductase (cytochrome b-c1 complex, complex III, CIII), resulting in different assemblies (supercomplex SCI(1)III(2)IV(1) and megacomplex MCI(2)III(2)IV(2)). Interacts with PHB2; the interaction decreases in absence of SPHK2. Interacts with AFG1L. Interacts with ABCB7; this interaction allows the regulation of cellular iron homeostasis and cellular reactive oxygen species (ROS) levels in cardiomyocytes. Interacts with FLVCR2; this interaction occurs in the absence of heme and is disrupted upon heme binding. Interacts with IRGC.

It is found in the mitochondrion inner membrane. The protein operates within energy metabolism; oxidative phosphorylation. Functionally, component of the cytochrome c oxidase, the last enzyme in the mitochondrial electron transport chain which drives oxidative phosphorylation. The respiratory chain contains 3 multisubunit complexes succinate dehydrogenase (complex II, CII), ubiquinol-cytochrome c oxidoreductase (cytochrome b-c1 complex, complex III, CIII) and cytochrome c oxidase (complex IV, CIV), that cooperate to transfer electrons derived from NADH and succinate to molecular oxygen, creating an electrochemical gradient over the inner membrane that drives transmembrane transport and the ATP synthase. Cytochrome c oxidase is the component of the respiratory chain that catalyzes the reduction of oxygen to water. Electrons originating from reduced cytochrome c in the intermembrane space (IMS) are transferred via the dinuclear copper A center (CU(A)) of subunit 2 and heme A of subunit 1 to the active site in subunit 1, a binuclear center (BNC) formed by heme A3 and copper B (CU(B)). The BNC reduces molecular oxygen to 2 water molecules using 4 electrons from cytochrome c in the IMS and 4 protons from the mitochondrial matrix. This Saimiri sciureus (Common squirrel monkey) protein is Cytochrome c oxidase subunit 4 isoform 1, mitochondrial (COX4I1).